The chain runs to 395 residues: Digeranylgeranylglycerophospholipid reductase (395 aa).

The FAD site is built by Ala15, Asp34, Cys45, Ala46, Gly48, Arg97, Ala121, Asp276, and Gly288. A 2,3-bis-O-(geranylgeranyl)-sn-glycerol 1-phospholipid contacts are provided by Arg329 and Gly365.

This sequence belongs to the geranylgeranyl reductase family. DGGGPL reductase subfamily. It depends on FAD as a cofactor.

It carries out the reaction a 2,3-bis-O-phytanyl-sn-glycerol 1-phospholipid + 8 A = a 2,3-bis-O-(geranylgeranyl)-sn-glycerol 1-phospholipid + 8 AH2. It catalyses the reaction 2,3-bis-O-(phytanyl)-sn-glycerol 1-phosphate + 8 A = 2,3-bis-O-(geranylgeranyl)-sn-glycerol 1-phosphate + 8 AH2. The enzyme catalyses CDP-2,3-bis-O-(geranylgeranyl)-sn-glycerol + 8 AH2 = CDP-2,3-bis-O-(phytanyl)-sn-glycerol + 8 A. The catalysed reaction is archaetidylserine + 8 AH2 = 2,3-bis-O-phytanyl-sn-glycero-3-phospho-L-serine + 8 A. It functions in the pathway membrane lipid metabolism; glycerophospholipid metabolism. Its function is as follows. Is involved in the reduction of 2,3-digeranylgeranylglycerophospholipids (unsaturated archaeols) into 2,3-diphytanylglycerophospholipids (saturated archaeols) in the biosynthesis of archaeal membrane lipids. Catalyzes the formation of archaetidic acid (2,3-di-O-phytanyl-sn-glyceryl phosphate) from 2,3-di-O-geranylgeranylglyceryl phosphate (DGGGP) via the hydrogenation of each double bond of the isoprenoid chains. Is also probably able to reduce double bonds of geranyl groups in CDP-2,3-bis-O-(geranylgeranyl)-sn-glycerol and archaetidylserine, thus acting at various stages in the biosynthesis of archaeal membrane lipids. The polypeptide is Digeranylgeranylglycerophospholipid reductase (Thermococcus gammatolerans (strain DSM 15229 / JCM 11827 / EJ3)).